The chain runs to 161 residues: Phosphopantetheine adenylyltransferase (161 aa).

Substrate is bound at residue Ser-9. ATP-binding positions include 9 to 10 (SF) and His-17. The substrate site is built by Lys-41, Thr-73, and Arg-87. ATP is bound by residues 88–90 (GLR), Glu-98, and 123–129 (FAHISST).

The protein belongs to the bacterial CoaD family. Homohexamer. Mg(2+) is required as a cofactor.

The protein resides in the cytoplasm. The enzyme catalyses (R)-4'-phosphopantetheine + ATP + H(+) = 3'-dephospho-CoA + diphosphate. The protein operates within cofactor biosynthesis; coenzyme A biosynthesis; CoA from (R)-pantothenate: step 4/5. Functionally, reversibly transfers an adenylyl group from ATP to 4'-phosphopantetheine, yielding dephospho-CoA (dPCoA) and pyrophosphate. This chain is Phosphopantetheine adenylyltransferase, found in Chloroflexus aurantiacus (strain ATCC 29366 / DSM 635 / J-10-fl).